The primary structure comprises 283 residues: Elongation factor Ts (283 aa).

Positions 80–83 are involved in Mg(2+) ion dislocation from EF-Tu; that stretch reads TDFV.

It belongs to the EF-Ts family.

The protein localises to the cytoplasm. Its function is as follows. Associates with the EF-Tu.GDP complex and induces the exchange of GDP to GTP. It remains bound to the aminoacyl-tRNA.EF-Tu.GTP complex up to the GTP hydrolysis stage on the ribosome. The chain is Elongation factor Ts from Haemophilus ducreyi (strain 35000HP / ATCC 700724).